Consider the following 255-residue polypeptide: Myogenic factor 5 (255 aa).

The bHLH domain occupies 83 to 134 (DRRKAATMRERRRLKKVNQAFETLKRCTTTNPNQRLPKVEILRNAIRYIESL). Residues 226 to 249 (DTASLSPATSANSQPATPGPSSSR) are disordered.

Efficient DNA binding requires dimerization with another bHLH protein.

It localises to the nucleus. In terms of biological role, acts as a transcriptional activator that promotes transcription of muscle-specific target genes and plays a role in muscle differentiation. Together with MYOG and MYOD1, co-occupies muscle-specific gene promoter core region during myogenesis. Induces fibroblasts to differentiate into myoblasts. Probable sequence specific DNA-binding protein. In Mus musculus (Mouse), this protein is Myogenic factor 5 (Myf5).